Reading from the N-terminus, the 314-residue chain is Ferrochelatase (314 aa).

Residues histidine 184 and glutamate 259 each contribute to the Fe cation site.

The protein belongs to the ferrochelatase family.

Its subcellular location is the cytoplasm. It carries out the reaction heme b + 2 H(+) = protoporphyrin IX + Fe(2+). It functions in the pathway porphyrin-containing compound metabolism; protoheme biosynthesis; protoheme from protoporphyrin-IX: step 1/1. Functionally, catalyzes the ferrous insertion into protoporphyrin IX. In Chlamydia trachomatis serovar A (strain ATCC VR-571B / DSM 19440 / HAR-13), this protein is Ferrochelatase.